The chain runs to 208 residues: V-type proton ATPase subunit E (208 aa).

This sequence belongs to the V-ATPase E subunit family.

Functionally, produces ATP from ADP in the presence of a proton gradient across the membrane. This is V-type proton ATPase subunit E from Chlamydia trachomatis serovar L2 (strain ATCC VR-902B / DSM 19102 / 434/Bu).